A 148-amino-acid polypeptide reads, in one-letter code: Thiol-disulfide oxidoreductase YkuV (148 aa).

The region spanning 2 to 145 is the Thioredoxin domain; the sequence is KLRQPMPELT…LEKRVNRVLA (144 aa). A disulfide bridge links cysteine 41 with cysteine 44.

Monomer.

Its subcellular location is the cytoplasm. Its function is as follows. Participates in various redox reactions through the reversible oxidation of its active center dithiol to a disulfide and catalyzes dithiol-disulfide exchange reactions. This chain is Thiol-disulfide oxidoreductase YkuV (ykuV), found in Bacillus subtilis (strain 168).